The primary structure comprises 147 residues: Echinoidin (147 aa).

One can recognise a C-type lectin domain in the interval 1–143 (GCCPTFWTSF…STRHYLICKL (143 aa)). Cystine bridges form between Cys3–Cys14, Cys31–Cys141, and Cys116–Cys132. The O-linked (Hex) serine glycan is linked to Ser38. The Cell attachment site signature appears at 39-41 (RGD).

Homodimer; disulfide-linked. Post-translationally, the identity of the saccharide is not reported in PubMed:3571253, and it is unlikely to be N-acetylgalactosamine. The sugar attached to Ser-38 is represented simply as Hex. In terms of tissue distribution, coelemic fluid.

The protein resides in the secreted. In terms of biological role, role in the defense system of the organism against microorganisms. This lectin is specific for Gal-GalNAc. In Heliocidaris crassispina (Sea urchin), this protein is Echinoidin.